Consider the following 403-residue polypeptide: Phosphoglycerate kinase (403 aa).

Substrate-binding positions include 22 to 24 (DLN), arginine 37, 60 to 63 (HLGN), arginine 119, and arginine 152. ATP contacts are provided by residues lysine 202, glutamate 325, and 355-358 (GGDT).

The protein belongs to the phosphoglycerate kinase family. In terms of assembly, monomer.

It localises to the cytoplasm. The enzyme catalyses (2R)-3-phosphoglycerate + ATP = (2R)-3-phospho-glyceroyl phosphate + ADP. It functions in the pathway carbohydrate degradation; glycolysis; pyruvate from D-glyceraldehyde 3-phosphate: step 2/5. The chain is Phosphoglycerate kinase from Orientia tsutsugamushi (strain Boryong) (Rickettsia tsutsugamushi).